The sequence spans 81 residues: ATP synthase subunit c, chloroplastic (81 aa).

The next 2 membrane-spanning stretches (helical) occupy residues proline 3–glycine 23 and leucine 57–alanine 77.

It belongs to the ATPase C chain family. In terms of assembly, F-type ATPases have 2 components, F(1) - the catalytic core - and F(0) - the membrane proton channel. F(1) has five subunits: alpha(3), beta(3), gamma(1), delta(1), epsilon(1). F(0) has four main subunits: a(1), b(1), b'(1) and c(10-14). The alpha and beta chains form an alternating ring which encloses part of the gamma chain. F(1) is attached to F(0) by a central stalk formed by the gamma and epsilon chains, while a peripheral stalk is formed by the delta, b and b' chains.

It is found in the plastid. The protein resides in the chloroplast thylakoid membrane. Functionally, f(1)F(0) ATP synthase produces ATP from ADP in the presence of a proton or sodium gradient. F-type ATPases consist of two structural domains, F(1) containing the extramembraneous catalytic core and F(0) containing the membrane proton channel, linked together by a central stalk and a peripheral stalk. During catalysis, ATP synthesis in the catalytic domain of F(1) is coupled via a rotary mechanism of the central stalk subunits to proton translocation. In terms of biological role, key component of the F(0) channel; it plays a direct role in translocation across the membrane. A homomeric c-ring of between 10-14 subunits forms the central stalk rotor element with the F(1) delta and epsilon subunits. The protein is ATP synthase subunit c, chloroplastic of Euglena gracilis.